The following is a 115-amino-acid chain: Large ribosomal subunit protein bL19 (115 aa).

It belongs to the bacterial ribosomal protein bL19 family.

This protein is located at the 30S-50S ribosomal subunit interface and may play a role in the structure and function of the aminoacyl-tRNA binding site. The sequence is that of Large ribosomal subunit protein bL19 from Streptococcus uberis (strain ATCC BAA-854 / 0140J).